We begin with the raw amino-acid sequence, 864 residues long: Leucine--tRNA ligase (864 aa).

A 'HIGH' region motif is present at residues 42 to 52 (PYPSGKLHMGH). Positions 624–628 (KMSKS) match the 'KMSKS' region motif. Lys-627 serves as a coordination point for ATP.

The protein belongs to the class-I aminoacyl-tRNA synthetase family.

The protein localises to the cytoplasm. It catalyses the reaction tRNA(Leu) + L-leucine + ATP = L-leucyl-tRNA(Leu) + AMP + diphosphate. This Burkholderia multivorans (strain ATCC 17616 / 249) protein is Leucine--tRNA ligase.